The primary structure comprises 283 residues: 4-diphosphocytidyl-2-C-methyl-D-erythritol kinase (283 aa).

The active site involves lysine 10. 99 to 109 (PMGGGLGGGSS) is an ATP binding site. Residue aspartate 141 is part of the active site.

Belongs to the GHMP kinase family. IspE subfamily. In terms of assembly, homodimer.

It catalyses the reaction 4-CDP-2-C-methyl-D-erythritol + ATP = 4-CDP-2-C-methyl-D-erythritol 2-phosphate + ADP + H(+). It participates in isoprenoid biosynthesis; isopentenyl diphosphate biosynthesis via DXP pathway; isopentenyl diphosphate from 1-deoxy-D-xylulose 5-phosphate: step 3/6. In terms of biological role, catalyzes the phosphorylation of the position 2 hydroxy group of 4-diphosphocytidyl-2C-methyl-D-erythritol. The chain is 4-diphosphocytidyl-2-C-methyl-D-erythritol kinase from Escherichia coli O7:K1 (strain IAI39 / ExPEC).